We begin with the raw amino-acid sequence, 625 residues long: Phosphomethylpyrimidine synthase (625 aa).

Residues Asn-230, Met-259, Tyr-288, His-324, 344–346 (SRG), 385–388 (DGLR), and Glu-424 each bind substrate. His-428 is a binding site for Zn(2+). Tyr-451 provides a ligand contact to substrate. His-492 is a binding site for Zn(2+). [4Fe-4S] cluster-binding residues include Cys-572, Cys-575, and Cys-580.

It belongs to the ThiC family. As to quaternary structure, homodimer. [4Fe-4S] cluster is required as a cofactor.

The enzyme catalyses 5-amino-1-(5-phospho-beta-D-ribosyl)imidazole + S-adenosyl-L-methionine = 4-amino-2-methyl-5-(phosphooxymethyl)pyrimidine + CO + 5'-deoxyadenosine + formate + L-methionine + 3 H(+). The protein operates within cofactor biosynthesis; thiamine diphosphate biosynthesis. In terms of biological role, catalyzes the synthesis of the hydroxymethylpyrimidine phosphate (HMP-P) moiety of thiamine from aminoimidazole ribotide (AIR) in a radical S-adenosyl-L-methionine (SAM)-dependent reaction. In Xanthomonas euvesicatoria pv. vesicatoria (strain 85-10) (Xanthomonas campestris pv. vesicatoria), this protein is Phosphomethylpyrimidine synthase.